The chain runs to 196 residues: Recombination protein RecR (196 aa).

Residues 56–71 form a C4-type zinc finger; sequence CPVCGGLDSQQPCMIC. In terms of domain architecture, Toprim spans 78–172; that stretch reads PLICVVETVA…SVTRLAQGVP (95 aa).

Belongs to the RecR family.

Functionally, may play a role in DNA repair. It seems to be involved in an RecBC-independent recombinational process of DNA repair. It may act with RecF and RecO. The chain is Recombination protein RecR from Acidiphilium cryptum (strain JF-5).